The chain runs to 479 residues: mRNA export factor ICP27 homolog (479 aa).

Over residues 1–15 (MVPSQRLSRTSSISS) the composition is skewed to low complexity. Disordered stretches follow at residues 1–77 (MVPS…PSSV) and 91–210 (KKWD…NKPW). Residues 35–44 (TDCDLDPMEG) are compositionally biased toward acidic residues. The tract at residues 61-146 (DEDPTPAHAI…TDESYGKRRH (86 aa)) is nuclear export signal and interaction with host NXF1. Residues 127-130 (KRRR) are nuclear localization signal. A compositionally biased stretch (basic and acidic residues) spans 132–142 (EVHGCTDESYG). The segment at 143–145 (KRR) is nuclear localization signal. Residues Cys-354, His-445, Cys-449, and Cys-454 each contribute to the Zn(2+) site. The CHC2-type zinc finger occupies 354-454 (CFLPNTRDYN…HTRDCRSASC (101 aa)).

Belongs to the HHV-1 ICP27 protein family. As to quaternary structure, interacts with host XPO1 and with the XPO1 export pathway components small GTPase RAN and nucleoporin NUP214. Interacts with host SPEN, OTT1 and OTT3. Interacts with host SRSF1, SRSF3, SRSF7 and SRPK1. Interacts with host DHX9; this interaction may have an inhibitory effect on virion production. Interacts (via N-terminus) with host NXF1; this interaction plays a role in mRNA export. Phosphorylated by cellular protein kinase CK2.

It is found in the host nucleus. The protein localises to the host cytoplasm. Promotes the nuclear export of a subset of early and late viral mRNAs by interacting with mRNAs and cellular export proteins. Additionally may prevent the establishment of cellular antiviral state, by acting as an alternative splicing factor for cellular RNAs such as STAT1, resulting in a STAT1 mRNA incapable of producing the STAT1alpha isoform. The chain is mRNA export factor ICP27 homolog from Homo sapiens (Human).